A 335-amino-acid polypeptide reads, in one-letter code: Anthranilate phosphoribosyltransferase 2 (335 aa).

5-phospho-alpha-D-ribose 1-diphosphate is bound by residues glycine 70, 73 to 74 (GD), threonine 78, 80 to 83 (NIST), 98 to 106 (KHGNRSASS), and serine 110. Residue glycine 70 participates in anthranilate binding. Serine 82 is a binding site for Mg(2+). Residue asparagine 101 participates in anthranilate binding. Residue arginine 156 coordinates anthranilate. The Mg(2+) site is built by aspartate 215 and glutamate 216.

Belongs to the anthranilate phosphoribosyltransferase family. In terms of assembly, homodimer. Requires Mg(2+) as cofactor.

The enzyme catalyses N-(5-phospho-beta-D-ribosyl)anthranilate + diphosphate = 5-phospho-alpha-D-ribose 1-diphosphate + anthranilate. It functions in the pathway amino-acid biosynthesis; L-tryptophan biosynthesis; L-tryptophan from chorismate: step 2/5. Its function is as follows. Catalyzes the transfer of the phosphoribosyl group of 5-phosphorylribose-1-pyrophosphate (PRPP) to anthranilate to yield N-(5'-phosphoribosyl)-anthranilate (PRA). This chain is Anthranilate phosphoribosyltransferase 2, found in Streptomyces coelicolor (strain ATCC BAA-471 / A3(2) / M145).